The sequence spans 386 residues: Sphingosine 1-phosphate receptor 4 (386 aa).

Residues 1–56 lie on the Extracellular side of the membrane; it reads MNISTWSTLVTPESCHRLAASGHSLLIVLHYNHSGRLASRGGSEDGGGLGMLRGPS. Asparagine 2 and asparagine 32 each carry an N-linked (GlcNAc...) asparagine glycan. Residues 57–77 form a helical membrane-spanning segment; the sequence is VAAGCLVVLENAMVLAAIAIY. Over 78-87 the chain is Cytoplasmic; the sequence is MRSRRWVYYC. The chain crosses the membrane as a helical span at residues 88 to 108; it reads LLNITLSDLLTGLAYVVNVLL. Topologically, residues 109–120 are extracellular; it reads SGTRTFQLSPVH. Residues 121 to 141 traverse the membrane as a helical segment; that stretch reads WFLREGLLFMALAASTFSLLF. At 142-163 the chain is on the cytoplasmic side; the sequence is TAGERFATMVRVAESGATKTSR. The chain crosses the membrane as a helical span at residues 164–184; the sequence is VYGCIGLCWLLAAILGLLPLL. Residues 185 to 208 are Extracellular-facing; that stretch reads GWNCVCAFPRCSSLLPLYSKGYVL. A helical membrane pass occupies residues 209–229; that stretch reads FCVVVFALILVAILSLYGAIF. Residues 230 to 254 lie on the Cytoplasmic side of the membrane; it reads RVVRANGQKSPRPPARRKSRRLLNT. Residues 255–275 form a helical membrane-spanning segment; it reads VLMILVAFVVCWGPLFGLLLA. The Extracellular segment spans residues 276 to 290; the sequence is DIFGSNVWAQEYLRG. Residues 291 to 311 traverse the membrane as a helical segment; it reads MDWILALAVFNSAINPLIYSF. The Cytoplasmic portion of the chain corresponds to 312–386; sequence RSREVQRAVL…LSSISSVRST (75 aa). Cysteine 325 carries S-palmitoyl cysteine lipidation.

This sequence belongs to the G-protein coupled receptor 1 family. Specifically expressed in fetal and adult lymphoid and hematopoietic tissue. Expressed in lung, spleen, thymus and lymph node but absent in other non-lymphatic tissue. Coexpressed with GNA15 at the same relative levels in all tissues examined, with the highest levels in adult spleen and lung.

Its subcellular location is the cell membrane. Receptor for the lysosphingolipid sphingosine 1-phosphate (S1P). S1P is a bioactive lysophospholipid that elicits diverse physiological effect on most types of cells and tissues. May be involved in cell migration processes that are specific for lymphocytes. This chain is Sphingosine 1-phosphate receptor 4 (S1pr4), found in Mus musculus (Mouse).